The sequence spans 95 residues: Acylphosphatase (95 aa).

One can recognise an Acylphosphatase-like domain in the interval 8–95 (RAKILVRGKV…GNFRTFEIKK (88 aa)). Catalysis depends on residues Arg-23 and Asn-41.

The protein belongs to the acylphosphatase family.

It catalyses the reaction an acyl phosphate + H2O = a carboxylate + phosphate + H(+). The protein is Acylphosphatase (acyP) of Leptospira interrogans serogroup Icterohaemorrhagiae serovar copenhageni (strain Fiocruz L1-130).